Here is a 477-residue protein sequence, read N- to C-terminus: Glycogen synthase 1 (477 aa).

Lysine 15 lines the ADP-alpha-D-glucose pocket.

This sequence belongs to the glycosyltransferase 1 family. Bacterial/plant glycogen synthase subfamily.

The enzyme catalyses [(1-&gt;4)-alpha-D-glucosyl](n) + ADP-alpha-D-glucose = [(1-&gt;4)-alpha-D-glucosyl](n+1) + ADP + H(+). It functions in the pathway glycan biosynthesis; glycogen biosynthesis. In terms of biological role, synthesizes alpha-1,4-glucan chains using ADP-glucose. The chain is Glycogen synthase 1 (glgA1) from Synechocystis sp. (strain ATCC 27184 / PCC 6803 / Kazusa).